Consider the following 572-residue polypeptide: Oxygen-dependent choline dehydrogenase (572 aa).

7–36 (DYIIIGAGSAGNVLATRLTEDRDVTVLLLE) serves as a coordination point for FAD. The active-site Proton acceptor is His-474.

The protein belongs to the GMC oxidoreductase family. FAD serves as cofactor.

The enzyme catalyses choline + A = betaine aldehyde + AH2. The catalysed reaction is betaine aldehyde + NAD(+) + H2O = glycine betaine + NADH + 2 H(+). It functions in the pathway amine and polyamine biosynthesis; betaine biosynthesis via choline pathway; betaine aldehyde from choline (cytochrome c reductase route): step 1/1. In terms of biological role, involved in the biosynthesis of the osmoprotectant glycine betaine. Catalyzes the oxidation of choline to betaine aldehyde and betaine aldehyde to glycine betaine at the same rate. This Paraburkholderia phymatum (strain DSM 17167 / CIP 108236 / LMG 21445 / STM815) (Burkholderia phymatum) protein is Oxygen-dependent choline dehydrogenase.